The primary structure comprises 157 residues: UPF0225 protein PSPPH_1399 (157 aa).

The protein belongs to the UPF0225 family.

This chain is UPF0225 protein PSPPH_1399, found in Pseudomonas savastanoi pv. phaseolicola (strain 1448A / Race 6) (Pseudomonas syringae pv. phaseolicola (strain 1448A / Race 6)).